The chain runs to 284 residues: MLSKQIPLGIYEKALPAGECWLERLRLAKTLGFDFVEMSVDETDARLARLDWSREQRLALVSAVAETGVRVPSMCLSAHRRFPLGSEDDAIRAQGLEIMRKAIQFAQDVGIRVIQLAGYDVYYQQANDETRCRFRDGLKESVDMASRAQVTLAMEIMDYPLMNSISKALGYAHYLNNPWFQLYPDIGNLSAWDNDVQMELQAGIGHIVAVHVKDTKPGVFKNVPFGEGVVDFERCFETLKQSGYCGPYLIEMWSETAENPAAEVAKARDWVKARMASAGLVEAA.

Belongs to the L-ribulose-5-phosphate 3-epimerase family.

It carries out the reaction L-ribulose 5-phosphate = L-xylulose 5-phosphate. It participates in cofactor degradation; L-ascorbate degradation; D-xylulose 5-phosphate from L-ascorbate: step 3/4. Functionally, catalyzes the isomerization of L-xylulose-5-phosphate to L-ribulose-5-phosphate. Is involved in the anaerobic L-ascorbate utilization. The sequence is that of L-ribulose-5-phosphate 3-epimerase UlaE from Salmonella typhimurium (strain LT2 / SGSC1412 / ATCC 700720).